The primary structure comprises 104 residues: Large ribosomal subunit protein uL23 (104 aa).

This sequence belongs to the universal ribosomal protein uL23 family. As to quaternary structure, part of the 50S ribosomal subunit. Contacts protein L29, and trigger factor when it is bound to the ribosome.

Functionally, one of the early assembly proteins it binds 23S rRNA. One of the proteins that surrounds the polypeptide exit tunnel on the outside of the ribosome. Forms the main docking site for trigger factor binding to the ribosome. This is Large ribosomal subunit protein uL23 from Cupriavidus metallidurans (strain ATCC 43123 / DSM 2839 / NBRC 102507 / CH34) (Ralstonia metallidurans).